The primary structure comprises 767 residues: Photosystem I P700 chlorophyll a apoprotein A1 (767 aa).

The next 8 membrane-spanning stretches (helical) occupy residues 72–95 (IFSA…FHGA), 158–181 (LMAL…FHYH), 197–221 (LNHH…HVSA), 305–323 (IAHH…GHMY), 364–387 (WHAQ…QHMY), 403–429 (IGLF…IAMV), 451–473 (AIIS…LYIH), and 548–566 (FMVH…LILL). Residues cysteine 590 and cysteine 599 each coordinate [4Fe-4S] cluster. The next 2 membrane-spanning stretches (helical) occupy residues 606-627 (HVFL…HFSW) and 681-703 (TSAY…MFLF). Histidine 692 lines the chlorophyll a' pocket. Chlorophyll a-binding residues include methionine 700 and tyrosine 708. Tryptophan 709 provides a ligand contact to phylloquinone. A helical transmembrane segment spans residues 741-761 (AVGVAHYLLGGIATTWAFFHA).

Belongs to the PsaA/PsaB family. As to quaternary structure, the PsaA/B heterodimer binds the P700 chlorophyll special pair and subsequent electron acceptors. PSI consists of a core antenna complex that captures photons, and an electron transfer chain that converts photonic excitation into a charge separation. The cyanobacterial PSI reaction center is composed of one copy each of PsaA,B,C,D,E,F,I,J,K,L,M and X, and forms trimeric complexes. Requires PSI electron transfer chain: 5 chlorophyll a, 1 chlorophyll a', 2 phylloquinones and 3 4Fe-4S clusters. PSI core antenna: 90 chlorophyll a, 22 carotenoids, 3 phospholipids and 1 galactolipid. P700 is a chlorophyll a/chlorophyll a' dimer, A0 is one or more chlorophyll a, A1 is one or both phylloquinones and FX is a shared 4Fe-4S iron-sulfur center. as cofactor.

It is found in the cellular thylakoid membrane. The enzyme catalyses reduced [plastocyanin] + hnu + oxidized [2Fe-2S]-[ferredoxin] = oxidized [plastocyanin] + reduced [2Fe-2S]-[ferredoxin]. In terms of biological role, psaA and PsaB bind P700, the primary electron donor of photosystem I (PSI), as well as the electron acceptors A0, A1 and FX. PSI is a plastocyanin/cytochrome c6-ferredoxin oxidoreductase, converting photonic excitation into a charge separation, which transfers an electron from the donor P700 chlorophyll pair to the spectroscopically characterized acceptors A0, A1, FX, FA and FB in turn. Oxidized P700 is reduced on the lumenal side of the thylakoid membrane by plastocyanin or cytochrome c6. This is Photosystem I P700 chlorophyll a apoprotein A1 from Parasynechococcus marenigrum (strain WH8102).